Consider the following 270-residue polypeptide: 3-methyl-2-oxobutanoate hydroxymethyltransferase (270 aa).

Aspartate 43 and aspartate 82 together coordinate Mg(2+). 3-methyl-2-oxobutanoate is bound by residues 43–44, aspartate 82, and lysine 112; that span reads DS. A Mg(2+)-binding site is contributed by glutamate 114. The active-site Proton acceptor is glutamate 179.

Belongs to the PanB family. As to quaternary structure, homodecamer; pentamer of dimers. Mg(2+) serves as cofactor.

It is found in the cytoplasm. It catalyses the reaction 3-methyl-2-oxobutanoate + (6R)-5,10-methylene-5,6,7,8-tetrahydrofolate + H2O = 2-dehydropantoate + (6S)-5,6,7,8-tetrahydrofolate. Its pathway is cofactor biosynthesis; (R)-pantothenate biosynthesis; (R)-pantoate from 3-methyl-2-oxobutanoate: step 1/2. In terms of biological role, catalyzes the reversible reaction in which hydroxymethyl group from 5,10-methylenetetrahydrofolate is transferred onto alpha-ketoisovalerate to form ketopantoate. This chain is 3-methyl-2-oxobutanoate hydroxymethyltransferase, found in Staphylococcus saprophyticus subsp. saprophyticus (strain ATCC 15305 / DSM 20229 / NCIMB 8711 / NCTC 7292 / S-41).